Here is a 546-residue protein sequence, read N- to C-terminus: DNA ligase (546 aa).

Glu244 lines the ATP pocket. Residue Lys246 is the N6-AMP-lysine intermediate of the active site. Residues Arg251, Arg266, Glu295, Phe334, Arg405, and Lys411 each coordinate ATP.

It belongs to the ATP-dependent DNA ligase family. The cofactor is Mg(2+).

The enzyme catalyses ATP + (deoxyribonucleotide)n-3'-hydroxyl + 5'-phospho-(deoxyribonucleotide)m = (deoxyribonucleotide)n+m + AMP + diphosphate.. DNA ligase that seals nicks in double-stranded DNA during DNA replication, DNA recombination and DNA repair. This is DNA ligase from Methanocorpusculum labreanum (strain ATCC 43576 / DSM 4855 / Z).